Here is a 340-residue protein sequence, read N- to C-terminus: Phenylalanine--tRNA ligase alpha subunit (340 aa).

Glutamate 254 contacts Mg(2+).

This sequence belongs to the class-II aminoacyl-tRNA synthetase family. Phe-tRNA synthetase alpha subunit type 1 subfamily. Tetramer of two alpha and two beta subunits. Requires Mg(2+) as cofactor.

Its subcellular location is the cytoplasm. The catalysed reaction is tRNA(Phe) + L-phenylalanine + ATP = L-phenylalanyl-tRNA(Phe) + AMP + diphosphate + H(+). This Acidithiobacillus ferrooxidans (strain ATCC 23270 / DSM 14882 / CIP 104768 / NCIMB 8455) (Ferrobacillus ferrooxidans (strain ATCC 23270)) protein is Phenylalanine--tRNA ligase alpha subunit.